Reading from the N-terminus, the 353-residue chain is Polyadenylate-binding protein-interacting protein 10 (353 aa).

The interval 1-61 (MAVAENAGVK…IDSTPETDDR (61 aa)) is disordered. Positions 20–31 (NNNTAASATETT) are enriched in low complexity. A PAM2-like motif is present at residues 96 to 106 (KLNPMAQEFVP). Residues 128-159 (AAPPKLADGNDHFPRRRRSFGQGKRRMNKRTS) form a disordered region. The segment covering 141-156 (PRRRRSFGQGKRRMNK) has biased composition (basic residues). Residues 142–153 (RRRRSFGQGKRR) carry the Bipartite nuclear localization signal motif. RRM domains follow at residues 169 to 244 (RTVY…PSKT) and 266 to 341 (RTVY…PSKT).

As to expression, expressed in cauline leaves, stems, rosette leaves, immature siliques and primary inflorescences.

It is found in the nucleus. This Arabidopsis thaliana (Mouse-ear cress) protein is Polyadenylate-binding protein-interacting protein 10 (CID10).